Reading from the N-terminus, the 84-residue chain is Large ribosomal subunit protein bL27 (84 aa).

A disordered region spans residues 1–23; it reads MAHKKGASSSRNGRESAAQRLGV.

It belongs to the bacterial ribosomal protein bL27 family.

The polypeptide is Large ribosomal subunit protein bL27 (Salinispora arenicola (strain CNS-205)).